Consider the following 288-residue polypeptide: Proteasome subunit beta (288 aa).

Positions 1-57 (MTAGDPMRLHPGHALSSFTEHLRALAPELLGPNRFAALDGATGSSGGTGAKDIAPHG) are cleaved as a propeptide — removed in mature form; by autocatalysis. Catalysis depends on Thr-58, which acts as the Nucleophile.

The protein belongs to the peptidase T1B family. The 20S proteasome core is composed of 14 alpha and 14 beta subunits that assemble into four stacked heptameric rings, resulting in a barrel-shaped structure. The two inner rings, each composed of seven catalytic beta subunits, are sandwiched by two outer rings, each composed of seven alpha subunits. The catalytic chamber with the active sites is on the inside of the barrel. Has a gated structure, the ends of the cylinder being occluded by the N-termini of the alpha-subunits. Is capped by the proteasome-associated ATPase, ARC.

It localises to the cytoplasm. The enzyme catalyses Cleavage of peptide bonds with very broad specificity.. It functions in the pathway protein degradation; proteasomal Pup-dependent pathway. The formation of the proteasomal ATPase ARC-20S proteasome complex, likely via the docking of the C-termini of ARC into the intersubunit pockets in the alpha-rings, may trigger opening of the gate for substrate entry. Interconversion between the open-gate and close-gate conformations leads to a dynamic regulation of the 20S proteasome proteolysis activity. Functionally, component of the proteasome core, a large protease complex with broad specificity involved in protein degradation. This chain is Proteasome subunit beta, found in Nocardia farcinica (strain IFM 10152).